A 544-amino-acid chain; its full sequence is Dynein intermediate chain 1 (544 aa).

6 WD repeats span residues 241 to 281, 289 to 330, 342 to 387, 402 to 441, 461 to 501, and 506 to 544; these read KARS…YPVS, GHLE…RPSE, SQCI…QPSN, VMTS…NQHE, THKA…EAPV, and PDGK…NLAN.

It belongs to the dynein intermediate chain family.

It is found in the cytoplasm. In terms of biological role, has a role in meiotic nuclear divsion where it promotes the movement of 'horsetails'. This chain is Dynein intermediate chain 1 (dic1), found in Schizosaccharomyces pombe (strain 972 / ATCC 24843) (Fission yeast).